We begin with the raw amino-acid sequence, 857 residues long: MDYLTDVTGRSSRVLRGTVNRLWYGHRQVRFQDCLQDVQRENMARPPQALRSDTGQRKTLEKKDGRRMSFQRPKGTMEYTVESRDSLNSIALKFDTTPNELVQLNKLFSRAVVPGQLLYVPDPDYISSVESSPSLSPISLLSPTSSEAEFEKRTDTERMPHKESTSSPAYSTTRQSRVVSSTSEEEEAFTEKFLKINCKYITDGKGIVTGVLLVTPNNIMFDPHKNDLLVQENGCEEYGIMCPMEEVTSAAMHKEIVNSKLKDSIPVDVDQLSCMREFCHFKKISPGNLHDLDSKMWDAGNDSASTAPRSTEESLSEDVFTESELSPIREEHLSSDELRQDKSSGTSSESVQTINQNISECSVNISDCADASDDVKGSLEPSGNDSGIVSSINDLERSESSMNVGDGLDKDISESSIVLTEANEGQAESKGSKNNCNDGNLADNQTGDQNHSREAAVVGNHRHEALQEKTLKQSFGDSETEAEELRKFWKDLTMQQAKQQREDMQHTTQKEIKGKMPTAETHIEGVCSSVAKEKRRHRTHRYLCLRVGKPMRKTFVSQASASMQQYAQRDKLEYWFAVPHERSDHLYSFFIQWSPDLYAEELGESAREPGFVVVKKNEEGESSDRSTNDSASRLWEVVSVAEYHRRIDALNTEELRTLCRRLKITTREDVNSKQATNIKHDQEPESFRPNLSDPSSLLQTEQIEKLTKHLPPRTIGYPWTLVYSTAKHGMSLKTLYRLMLGLDTPVLLVIKDSDSQIFGALASEPFKVSDCFYGTGETFLFTFCPDFEVFKWTGDNMFFIKGDMDSLAFGGGGGEFALWLDGDSYHGRSHTCKTFGNSILSKKEDFIVQDIEIWAFE.

Residues 43-74 (MARPPQALRSDTGQRKTLEKKDGRRMSFQRPK) form a disordered region. The segment covering 54 to 67 (TGQRKTLEKKDGRR) has biased composition (basic and acidic residues). The region spanning 77–120 (MEYTVESRDSLNSIALKFDTTPNELVQLNKLFSRAVVPGQLLYV) is the LysM domain. A compositionally biased stretch (low complexity) spans 131–146 (SSPSLSPISLLSPTSS). The interval 131 to 183 (SSPSLSPISLLSPTSSEAEFEKRTDTERMPHKESTSSPAYSTTRQSRVVSSTS) is disordered. Over residues 149–164 (EFEKRTDTERMPHKES) the composition is skewed to basic and acidic residues. Residues 171-182 (STTRQSRVVSST) show a composition bias toward low complexity. The region spanning 190–249 (TEKFLKINCKYITDGKGIVTGVLLVTPNNIMFDPHKNDLLVQENGCEEYGIMCPMEEVTS) is the GRAM domain. Disordered regions lie at residues 300–353 (GNDS…SVQT), 372–409 (SDDVKGSLEPSGNDSGIVSSINDLERSESSMNVGDGLD), 421–450 (EANEGQAESKGSKNNCNDGNLADNQTGDQN), and 673–694 (KQATNIKHDQEPESFRPNLSDP). Residues 327–342 (PIREEHLSSDELRQDK) show a composition bias toward basic and acidic residues. Composition is skewed to polar residues over residues 343-353 (SSGTSSESVQT), 381-393 (PSGNDSGIVSSIN), and 432-449 (SKNNCNDGNLADNQTGDQ). Residues 696–857 (SLLQTEQIEK…VQDIEIWAFE (162 aa)) enclose the TLDc domain.

Belongs to the OXR1 family.

It is found in the mitochondrion. Functionally, may be involved in protection from oxidative damage. This is Oxidation resistance protein 1 (oxr1) from Xenopus laevis (African clawed frog).